The sequence spans 561 residues: Malto-oligosyltrehalose trehalohydrolase (561 aa).

253–258 (RLDAVH) provides a ligand contact to substrate. The Nucleophile role is filled by Asp255. Residue Glu286 is the Proton donor of the active site. Substrate-binding positions include 311-315 (DDFHH) and 379-384 (HDQVGN).

Belongs to the glycosyl hydrolase 13 family. As to quaternary structure, homodimer.

It is found in the cytoplasm. It catalyses the reaction hydrolysis of (1-&gt;4)-alpha-D-glucosidic linkage in 4-alpha-D-[(1-&gt;4)-alpha-D-glucanosyl]n trehalose to yield trehalose and (1-&gt;4)-alpha-D-glucan.. Its pathway is glycan biosynthesis; trehalose biosynthesis. This is Malto-oligosyltrehalose trehalohydrolase (treZ) from Saccharolobus solfataricus (strain ATCC 35092 / DSM 1617 / JCM 11322 / P2) (Sulfolobus solfataricus).